We begin with the raw amino-acid sequence, 207 residues long: MPTLNLFNQAGEKISEVALNDAIFGITPNQQVLYDVVNAQRAALRQGTAKTKTRAEVRGGGKKPWRQKGTGRARQGSIRSPQWRGGGIVFGPIPRSYAVKVNQKVKQLALKSALSYHVLAENLVLVDNITVAEPKTKLFIEIMNNLKLDDRSIVLVDSVDKNLLLASNNLPGAVVREVSQVSVYELLKFKQVVLTQGAVKYYEEVLV.

Positions G47–I78 are disordered. Residues G60–G71 are compositionally biased toward basic residues.

Belongs to the universal ribosomal protein uL4 family. In terms of assembly, part of the 50S ribosomal subunit.

Its function is as follows. One of the primary rRNA binding proteins, this protein initially binds near the 5'-end of the 23S rRNA. It is important during the early stages of 50S assembly. It makes multiple contacts with different domains of the 23S rRNA in the assembled 50S subunit and ribosome. In terms of biological role, forms part of the polypeptide exit tunnel. The chain is Large ribosomal subunit protein uL4 from Acholeplasma laidlawii (strain PG-8A).